Here is a 92-residue protein sequence, read N- to C-terminus: Small ribosomal subunit protein uS19 (92 aa).

This sequence belongs to the universal ribosomal protein uS19 family.

In terms of biological role, protein S19 forms a complex with S13 that binds strongly to the 16S ribosomal RNA. The sequence is that of Small ribosomal subunit protein uS19 from Enterococcus faecalis (strain ATCC 700802 / V583).